The primary structure comprises 328 residues: Oligopeptide transport ATP-binding protein AppD (328 aa).

One can recognise an ABC transporter domain in the interval 5–256 (LEVNNLKTYF…PLHPYTEGLL (252 aa)). 41-48 (GESGSGKS) contacts ATP.

It belongs to the ABC transporter superfamily.

Its subcellular location is the cell membrane. Functionally, this protein is a component of an oligopeptide permease, a binding protein-dependent transport system. This APP system can completely substitute for the OPP system in both sporulation and genetic competence, though, unlike OPP, is incapable of transporting tripeptides. Probably responsible for energy coupling to the transport system. The chain is Oligopeptide transport ATP-binding protein AppD (appD) from Bacillus subtilis (strain 168).